The following is a 478-amino-acid chain: Zinc finger and SCAN domain-containing protein 26 (478 aa).

Lysine 17 is covalently cross-linked (Glycyl lysine isopeptide (Lys-Gly) (interchain with G-Cter in SUMO2)). Residues 51–133 enclose the SCAN box domain; it reads CKQFRQLRYE…VVLEDLQLDL (83 aa). Disordered stretches follow at residues 159–181 and 200–226; these read GVQE…KGEE and ESSG…AKPK. 2 stretches are compositionally biased toward basic and acidic residues: residues 164-181 and 207-226; these read QVRH…KGEE and EPME…AKPK. A C2H2-type 1; degenerate zinc finger spans residues 231–253; that stretch reads YKCSEREQRFIQHLDLIEHASTH. C2H2-type zinc fingers lie at residues 282-304, 310-332, 338-360, 366-388, 394-416, 422-444, and 450-472; these read HQCH…QKIH, YQCN…LRIH, YLCI…QRIH, CECK…QRIH, HQCN…HRIH, FKCN…VRIH, and YQCS…QRYH.

The protein resides in the nucleus. In terms of biological role, may be involved in transcriptional regulation. This is Zinc finger and SCAN domain-containing protein 26 (ZSCAN26) from Homo sapiens (Human).